The primary structure comprises 1253 residues: Cytoplasmic FMR1-interacting protein 2 (1253 aa).

Belongs to the CYFIP family.

The protein localises to the cytoplasm. Its function is as follows. Involved in T-cell adhesion and p53-dependent induction of apoptosis. Does not bind RNA. The polypeptide is Cytoplasmic FMR1-interacting protein 2 (cyfip2) (Xenopus laevis (African clawed frog)).